We begin with the raw amino-acid sequence, 735 residues long: Stonin-1 (735 aa).

A disordered region spans residues 1-35; that stretch reads MCSTNPGKWVTFDDDPAVQSSQKSKNFPLENQGVC. An SHD domain is found at 275 to 408; it reads GWSFMLRIPE…KLPAVSKPKK (134 aa). An MHD domain is found at 412 to 715; sequence EQEISLEIVD…ACYNIQVEIE (304 aa).

Belongs to the Stoned B family. As to expression, ubiquitous.

It is found in the cytoplasm. Its subcellular location is the membrane. Its function is as follows. May be involved in the endocytic machinery. In Homo sapiens (Human), this protein is Stonin-1 (STON1).